Reading from the N-terminus, the 437-residue chain is Acyl-coenzyme A thioesterase 9, mitochondrial (437 aa).

The N-terminal 21 residues, 1-21 (MRRAALRLCTLSKGLLAPSRG), are a transit peptide targeting the mitochondrion. HotDog ACOT-type domains follow at residues 84-207 (SYIE…RDSE) and 287-399 (ENSK…EKEV). Lys101 is subject to N6-acetyllysine.

It belongs to the acyl coenzyme A hydrolase family. In terms of assembly, interacts with NYAP1, NYAP2 and MYO16.

It localises to the mitochondrion. The protein resides in the mitochondrion matrix. Its subcellular location is the mitochondrion inner membrane. The enzyme catalyses butanoyl-CoA + H2O = butanoate + CoA + H(+). It carries out the reaction propanoyl-CoA + H2O = propanoate + CoA + H(+). The catalysed reaction is hexadecanoyl-CoA + H2O = hexadecanoate + CoA + H(+). It catalyses the reaction octanoyl-CoA + H2O = octanoate + CoA + H(+). The enzyme catalyses decanoyl-CoA + H2O = decanoate + CoA + H(+). It carries out the reaction tetradecanoyl-CoA + H2O = tetradecanoate + CoA + H(+). The catalysed reaction is 4,8-dimethylnonanoyl-CoA + H2O = 4,8-dimethylnonanoate + CoA + H(+). It catalyses the reaction 3-methylbutanoyl-CoA + H2O = 3-methylbutanoate + CoA + H(+). The enzyme catalyses 2-methylpropanoyl-CoA + H2O = 2-methylpropanoate + CoA + H(+). Its pathway is lipid metabolism; fatty acid metabolism. With respect to regulation, strongly inhibited by NADH and CoA. Its function is as follows. Mitochondrial acyl-CoA thioesterase. Catalyzes the hydrolysis of acyl-CoAs into free fatty acids and coenzyme A (CoA), regulating their respective intracellular levels. Regulates both mitochondrial lipid and amino acid metabolism. In Bos taurus (Bovine), this protein is Acyl-coenzyme A thioesterase 9, mitochondrial (ACOT9).